The chain runs to 273 residues: 4-hydroxy-tetrahydrodipicolinate reductase (273 aa).

NAD(+) is bound by residues 12–17 (GAGGRM) and Glu-38. Arg-39 serves as a coordination point for NADP(+). Residues 102-104 (GTT) and 126-129 (AANF) each bind NAD(+). Catalysis depends on His-159, which acts as the Proton donor/acceptor. His-160 serves as a coordination point for (S)-2,3,4,5-tetrahydrodipicolinate. Lys-163 serves as the catalytic Proton donor. 169-170 (GT) provides a ligand contact to (S)-2,3,4,5-tetrahydrodipicolinate.

The protein belongs to the DapB family. In terms of assembly, homotetramer.

The protein resides in the cytoplasm. The catalysed reaction is (S)-2,3,4,5-tetrahydrodipicolinate + NAD(+) + H2O = (2S,4S)-4-hydroxy-2,3,4,5-tetrahydrodipicolinate + NADH + H(+). It carries out the reaction (S)-2,3,4,5-tetrahydrodipicolinate + NADP(+) + H2O = (2S,4S)-4-hydroxy-2,3,4,5-tetrahydrodipicolinate + NADPH + H(+). It functions in the pathway amino-acid biosynthesis; L-lysine biosynthesis via DAP pathway; (S)-tetrahydrodipicolinate from L-aspartate: step 4/4. In terms of biological role, catalyzes the conversion of 4-hydroxy-tetrahydrodipicolinate (HTPA) to tetrahydrodipicolinate. The protein is 4-hydroxy-tetrahydrodipicolinate reductase of Escherichia coli (strain K12 / MC4100 / BW2952).